A 1828-amino-acid chain; its full sequence is Chromodomain-helicase-DNA-binding protein 2 (1828 aa).

Over residues 1–14 (MMRNKDKSQEEDSS) the composition is skewed to basic and acidic residues. Residues 1–243 (MMRNKDKSQE…EDDDFETDSD (243 aa)) are disordered. Residues 15-75 (LHSNASSHSA…SESESAGSKS (61 aa)) show a composition bias toward low complexity. Composition is skewed to basic and acidic residues over residues 81-101 (EAKEKPASKKERIADVKKMWE), 115-128 (SRQEPSRFNIKEEA), and 146-155 (KKQEKWKQEP). Over residues 175–204 (VKARRPVPRRTVPKPRVKKQPKTQRGKRKK) the composition is skewed to basic residues. A phosphoserine mark is found at S207 and S208. Positions 234-243 (EDDDFETDSD) are enriched in acidic residues. T240 carries the post-translational modification Phosphothreonine. Residue S242 is modified to Phosphoserine. 2 consecutive Chromo domains span residues 261-353 (ETIE…QWLG) and 378-456 (QIVE…IPTR). The 171-residue stretch at 496 to 666 (AHSWCKNNSV…WSLLHFIMPE (171 aa)) folds into the Helicase ATP-binding domain. 509-516 (DEMGLGKT) provides a ligand contact to ATP. The short motif at 617–620 (DEAH) is the DEAH box element. In terms of domain architecture, Helicase C-terminal spans 795 to 946 (LLDKLLTRLR…HLVIQRMDTT (152 aa)). 4 disordered regions span residues 1030-1124 (EDEE…RSVR), 1331-1462 (VTGG…DEDD), 1556-1638 (HKKR…ADRG), and 1680-1828 (HMDA…VRKT). Residues 1037–1065 (ERPHKDWDEIIPEEQRKKVEEEERQKELE) show a composition bias toward basic and acidic residues. Residues S1085, S1087, S1365, and S1386 each carry the phosphoserine modification. A compositionally biased stretch (basic and acidic residues) spans 1347–1371 (KKENKVPRLKEEHGIELSSPRHSDN). 2 stretches are compositionally biased toward basic and acidic residues: residues 1396 to 1431 (ENKENKEKQMSSRKDKEGDKERKKSKDKKEKPKSGD) and 1565 to 1574 (EQKKKDDVTG). The segment at 1464–1566 (LDQETFSICK…KKRSQEEEEQ (103 aa)) is CHD1 helical C-terminal domain (CHCT). A compositionally biased stretch (polar residues) spans 1584 to 1601 (SGSSRDSLISQSHTSHNL). Basic and acidic residues-rich tracts occupy residues 1698-1720 (RPYDQYSSDRDHRGHRDYYDRHH), 1739-1749 (QDFRRMSDHRP), 1760-1772 (DHYRSFHTDKLGE), and 1795-1814 (SPHDSKSPLDHRSPLERSLE). S1807 bears the Phosphoserine mark.

The protein belongs to the SNF2/RAD54 helicase family. Interacts with MYOD1. Interacts with histone H3.3.

The protein resides in the nucleus. It carries out the reaction ATP + H2O = ADP + phosphate + H(+). Functionally, ATP-dependent chromatin-remodeling factor that specifically binds to the promoter of target genes, leading to chromatin remodeling, possibly by promoting deposition of histone H3.3. Involved in myogenesis via interaction with MYOD1: binds to myogenic gene regulatory sequences and mediates incorporation of histone H3.3 prior to the onset of myogenic gene expression, promoting their expression. The chain is Chromodomain-helicase-DNA-binding protein 2 (CHD2) from Homo sapiens (Human).